Here is a 129-residue protein sequence, read N- to C-terminus: Small ribosomal subunit protein uS11 (129 aa).

This sequence belongs to the universal ribosomal protein uS11 family. In terms of assembly, part of the 30S ribosomal subunit. Interacts with proteins S7 and S18. Binds to IF-3.

In terms of biological role, located on the platform of the 30S subunit, it bridges several disparate RNA helices of the 16S rRNA. Forms part of the Shine-Dalgarno cleft in the 70S ribosome. The chain is Small ribosomal subunit protein uS11 from Chelativorans sp. (strain BNC1).